A 318-amino-acid chain; its full sequence is Acetylglutamate kinase (318 aa).

Substrate is bound by residues 80 to 81 (GG), arginine 102, and asparagine 203.

The protein belongs to the acetylglutamate kinase family. ArgB subfamily.

It is found in the cytoplasm. It carries out the reaction N-acetyl-L-glutamate + ATP = N-acetyl-L-glutamyl 5-phosphate + ADP. Its pathway is amino-acid biosynthesis; L-arginine biosynthesis; N(2)-acetyl-L-ornithine from L-glutamate: step 2/4. In terms of biological role, catalyzes the ATP-dependent phosphorylation of N-acetyl-L-glutamate. In Bifidobacterium adolescentis (strain ATCC 15703 / DSM 20083 / NCTC 11814 / E194a), this protein is Acetylglutamate kinase.